Reading from the N-terminus, the 310-residue chain is Ribonuclease Z (310 aa).

His-64, His-66, Asp-68, His-69, His-142, Asp-213, and His-271 together coordinate Zn(2+). Asp-68 functions as the Proton acceptor in the catalytic mechanism.

The protein belongs to the RNase Z family. Homodimer. Zn(2+) is required as a cofactor.

It catalyses the reaction Endonucleolytic cleavage of RNA, removing extra 3' nucleotides from tRNA precursor, generating 3' termini of tRNAs. A 3'-hydroxy group is left at the tRNA terminus and a 5'-phosphoryl group is left at the trailer molecule.. Functionally, zinc phosphodiesterase, which displays some tRNA 3'-processing endonuclease activity. Probably involved in tRNA maturation, by removing a 3'-trailer from precursor tRNA. The chain is Ribonuclease Z from Treponema pallidum (strain Nichols).